Reading from the N-terminus, the 200-residue chain is Protein GrpE (200 aa).

The segment covering 1-23 (MEEEIKETSEDKEEENTEAEAVE) has biased composition (acidic residues). The tract at residues 1–39 (MEEEIKETSEDKEEENTEAEAVENNEKSEENAGNVEEDE) is disordered.

This sequence belongs to the GrpE family. As to quaternary structure, homodimer.

The protein localises to the cytoplasm. Participates actively in the response to hyperosmotic and heat shock by preventing the aggregation of stress-denatured proteins, in association with DnaK and GrpE. It is the nucleotide exchange factor for DnaK and may function as a thermosensor. Unfolded proteins bind initially to DnaJ; upon interaction with the DnaJ-bound protein, DnaK hydrolyzes its bound ATP, resulting in the formation of a stable complex. GrpE releases ADP from DnaK; ATP binding to DnaK triggers the release of the substrate protein, thus completing the reaction cycle. Several rounds of ATP-dependent interactions between DnaJ, DnaK and GrpE are required for fully efficient folding. The chain is Protein GrpE from Brachyspira hyodysenteriae (strain ATCC 49526 / WA1).